Consider the following 439-residue polypeptide: Glucan 1,3-beta-glucosidase (439 aa).

Positions 1-18 (MLLSLLFLLSTFAFGALT) are cleaved as a signal peptide. The active-site Proton donor is Glu-227. 2 disulfide bridges follow: Cys-311/Cys-437 and Cys-336/Cys-366. Catalysis depends on Glu-328, which acts as the Nucleophile.

This sequence belongs to the glycosyl hydrolase 5 (cellulase A) family.

It is found in the secreted. It carries out the reaction Successive hydrolysis of beta-D-glucose units from the non-reducing ends of (1-&gt;3)-beta-D-glucans, releasing alpha-glucose.. Beta-glucanases participate in the metabolism of beta-glucan, the main structural component of the cell wall. It could also function biosynthetically as a transglycosylase. In Lachancea kluyveri (strain ATCC 58438 / CBS 3082 / BCRC 21498 / NBRC 1685 / JCM 7257 / NCYC 543 / NRRL Y-12651) (Yeast), this protein is Glucan 1,3-beta-glucosidase (EXG1).